The primary structure comprises 1944 residues: Anaphase-promoting complex subunit 1 (1944 aa).

Phosphoserine is present on residues S51 and S60. T291 bears the Phosphothreonine mark. The interval 312 to 343 (ESPVASPFQNYSSIHSQSRSTSSPSLHSRSPS) is disordered. S313, S341, S343, S355, S362, S373, and S377 each carry phosphoserine. A compositionally biased stretch (low complexity) spans 323 to 343 (SSIHSQSRSTSSPSLHSRSPS). The tract at residues 370-395 (NLSSHSQSPKRHSISHSPSGSFNDSF) is disordered. Polar residues predominate over residues 384–393 (SHSPSGSFND). T537 carries the phosphothreonine modification. Phosphoserine occurs at positions 547 and 555. Y571 bears the Phosphotyrosine mark. S680, S686, and S688 each carry phosphoserine. The interval 991 to 1014 (NLPRGKSVLSSEVSSGTEAEEEDD) is disordered. The span at 998 to 1007 (VLSSEVSSGT) shows a compositional bias: polar residues. PC repeat units follow at residues 1297–1325 (AAGL…PEQL), 1366–1404 (GATL…PEFL), 1467–1501 (GACL…YLSA), and 1520–1552 (LLSL…EMNY).

This sequence belongs to the APC1 family. As to quaternary structure, the mammalian APC/C is composed at least of 14 distinct subunits ANAPC1, ANAPC2, CDC27/APC3, ANAPC4, ANAPC5, CDC16/APC6, ANAPC7, CDC23/APC8, ANAPC10, ANAPC11, CDC26/APC12, ANAPC13, ANAPC15 and ANAPC16 that assemble into a complex of at least 19 chains with a combined molecular mass of around 1.2 MDa; APC/C interacts with FZR1 and FBXO5. Post-translationally, phosphorylated. Phosphorylation on Ser-355 occurs specifically during mitosis. As to expression, abundantly expressed in proliferating fibroblasts, juvenile testis, adult brain and epididymis.

Its pathway is protein modification; protein ubiquitination. In terms of biological role, component of the anaphase promoting complex/cyclosome (APC/C), a cell cycle-regulated E3 ubiquitin ligase that controls progression through mitosis and the G1 phase of the cell cycle. The APC/C complex acts by mediating ubiquitination and subsequent degradation of target proteins: it mainly mediates the formation of 'Lys-11'-linked polyubiquitin chains and, to a lower extent, the formation of 'Lys-48'- and 'Lys-63'-linked polyubiquitin chains. The APC/C complex catalyzes assembly of branched 'Lys-11'-/'Lys-48'-linked branched ubiquitin chains on target proteins. The chain is Anaphase-promoting complex subunit 1 (Anapc1) from Mus musculus (Mouse).